The chain runs to 491 residues: Protein nucleotidyltransferase YdiU (491 aa).

Positions 94, 96, 97, 117, 129, 130, 180, and 187 each coordinate ATP. The Proton acceptor role is filled by aspartate 256. Mg(2+)-binding residues include asparagine 257 and aspartate 266. Residue aspartate 266 participates in ATP binding.

This sequence belongs to the SELO family. Requires Mg(2+) as cofactor. Mn(2+) serves as cofactor.

It carries out the reaction L-seryl-[protein] + ATP = 3-O-(5'-adenylyl)-L-seryl-[protein] + diphosphate. It catalyses the reaction L-threonyl-[protein] + ATP = 3-O-(5'-adenylyl)-L-threonyl-[protein] + diphosphate. The catalysed reaction is L-tyrosyl-[protein] + ATP = O-(5'-adenylyl)-L-tyrosyl-[protein] + diphosphate. The enzyme catalyses L-histidyl-[protein] + UTP = N(tele)-(5'-uridylyl)-L-histidyl-[protein] + diphosphate. It carries out the reaction L-seryl-[protein] + UTP = O-(5'-uridylyl)-L-seryl-[protein] + diphosphate. It catalyses the reaction L-tyrosyl-[protein] + UTP = O-(5'-uridylyl)-L-tyrosyl-[protein] + diphosphate. In terms of biological role, nucleotidyltransferase involved in the post-translational modification of proteins. It can catalyze the addition of adenosine monophosphate (AMP) or uridine monophosphate (UMP) to a protein, resulting in modifications known as AMPylation and UMPylation. The chain is Protein nucleotidyltransferase YdiU from Clostridium botulinum (strain 657 / Type Ba4).